A 376-amino-acid chain; its full sequence is Alpha-2,8-sialyltransferase 8E (376 aa).

Over 1–17 (MRYADPSANRDLLGNRT) the chain is Cytoplasmic. The chain crosses the membrane as a helical; Signal-anchor for type II membrane protein span at residues 18 to 38 (LLFIFICAFALVTLLQQILYG). Residues 39–376 (RNYIKRYFEF…RVHTGTCSCC (338 aa)) lie on the Lumenal side of the membrane. N-linked (GlcNAc...) asparagine glycosylation is found at Asn-56 and Asn-96. 2 disulfide bridges follow: Cys-164–Cys-313 and Cys-178–Cys-373. Residues Asn-192 and 214 to 216 (NPS) each bind substrate. N-linked (GlcNAc...) asparagine glycosylation is found at Asn-241 and Asn-284. Substrate is bound at residue 300–302 (STG). The Proton donor/acceptor role is filled by His-348.

This sequence belongs to the glycosyltransferase 29 family.

It localises to the golgi apparatus membrane. The catalysed reaction is a ganglioside GQ1c (d18:1(4E)) + CMP-N-acetyl-beta-neuraminate = a ganglioside GP1c (d18:1(4E)) + CMP + H(+). The protein operates within protein modification; protein glycosylation. Involved in the synthesis of gangliosides GD1c, GT1a, GQ1b, GP1c and GT3 from GD1a, GT1b, GM1b and GD3 respectively. The chain is Alpha-2,8-sialyltransferase 8E (ST8SIA5) from Pan troglodytes (Chimpanzee).